Consider the following 161-residue polypeptide: MSKILLGFMGAGKTTVGRLLDPNFHDMDELIVNQIGMSINDFFAQEGEEAFRKIETATLESLLANQAKIISPGGGIVVNPHNRDLLEKNPYNIYLRVDFDTLYKRIENDLAMQRPLYLNNTREEFKKIFEARLPIYEKIATHIIDVAGKTPEEIAEIIRCL.

10 to 15 provides a ligand contact to ATP; it reads GAGKTT. Threonine 14 lines the Mg(2+) pocket. Aspartate 28, arginine 52, and glycine 74 together coordinate substrate. Arginine 114 is a binding site for ATP. Arginine 132 provides a ligand contact to substrate.

The protein belongs to the shikimate kinase family. As to quaternary structure, monomer. It depends on Mg(2+) as a cofactor.

The protein resides in the cytoplasm. The catalysed reaction is shikimate + ATP = 3-phosphoshikimate + ADP + H(+). Its pathway is metabolic intermediate biosynthesis; chorismate biosynthesis; chorismate from D-erythrose 4-phosphate and phosphoenolpyruvate: step 5/7. In terms of biological role, catalyzes the specific phosphorylation of the 3-hydroxyl group of shikimic acid using ATP as a cosubstrate. The sequence is that of Shikimate kinase from Streptococcus gordonii (strain Challis / ATCC 35105 / BCRC 15272 / CH1 / DL1 / V288).